The primary structure comprises 208 residues: Ribosomal RNA large subunit methyltransferase E (208 aa).

G62, W64, D82, D98, and D123 together coordinate S-adenosyl-L-methionine. K163 functions as the Proton acceptor in the catalytic mechanism.

This sequence belongs to the class I-like SAM-binding methyltransferase superfamily. RNA methyltransferase RlmE family.

Its subcellular location is the cytoplasm. The catalysed reaction is uridine(2552) in 23S rRNA + S-adenosyl-L-methionine = 2'-O-methyluridine(2552) in 23S rRNA + S-adenosyl-L-homocysteine + H(+). Specifically methylates the uridine in position 2552 of 23S rRNA at the 2'-O position of the ribose in the fully assembled 50S ribosomal subunit. This chain is Ribosomal RNA large subunit methyltransferase E, found in Idiomarina loihiensis (strain ATCC BAA-735 / DSM 15497 / L2-TR).